The primary structure comprises 154 residues: Transcriptional repressor NrdR (154 aa).

The disordered stretch occupies residues 1 to 22 (MRCPFCAHDDSQVKDSRPTDDG). A zinc finger lies at 3-34 (CPFCAHDDSQVKDSRPTDDGAAIRRRRQCEGC). Residues 7 to 22 (AHDDSQVKDSRPTDDG) are compositionally biased toward basic and acidic residues. Positions 49-139 (MTVVKSDGRR…VYKDFREAKD (91 aa)) constitute an ATP-cone domain.

This sequence belongs to the NrdR family. Zn(2+) is required as a cofactor.

Its function is as follows. Negatively regulates transcription of bacterial ribonucleotide reductase nrd genes and operons by binding to NrdR-boxes. This is Transcriptional repressor NrdR from Rhizorhabdus wittichii (strain DSM 6014 / CCUG 31198 / JCM 15750 / NBRC 105917 / EY 4224 / RW1) (Sphingomonas wittichii).